The following is a 347-amino-acid chain: ATPase GET3 (347 aa).

26 to 33 (KGGVGKTT) lines the ATP pocket. Residue D57 is part of the active site. ATP contacts are provided by E240 and N267. 2 residues coordinate Zn(2+): C279 and C282.

This sequence belongs to the arsA ATPase family. Homodimer. Component of the Golgi to ER traffic (GET) complex, which is composed of GET1, GET2 and GET3. Within the complex, GET1 and GET2 form a heterotetramer which is stabilized by phosphatidylinositol binding and which binds to the GET3 homodimer. Interacts with the chloride channel protein GEF1.

The protein localises to the cytoplasm. It is found in the endoplasmic reticulum. The protein resides in the golgi apparatus. In terms of biological role, ATPase required for the post-translational delivery of tail-anchored (TA) proteins to the endoplasmic reticulum. Recognizes and selectively binds the transmembrane domain of TA proteins in the cytosol. This complex then targets to the endoplasmic reticulum by membrane-bound receptors GET1 and GET2, where the tail-anchored protein is released for insertion. This process is regulated by ATP binding and hydrolysis. ATP binding drives the homodimer towards the closed dimer state, facilitating recognition of newly synthesized TA membrane proteins. ATP hydrolysis is required for insertion. Subsequently, the homodimer reverts towards the open dimer state, lowering its affinity for the GET1-GET2 receptor, and returning it to the cytosol to initiate a new round of targeting. Cooperates with the HDEL receptor ERD2 to mediate the ATP-dependent retrieval of resident ER proteins that contain a C-terminal H-D-E-L retention signal from the Golgi to the ER. Involved in low-level resistance to the oxyanions arsenite and arsenate, and in heat tolerance. The sequence is that of ATPase GET3 from Scheffersomyces stipitis (strain ATCC 58785 / CBS 6054 / NBRC 10063 / NRRL Y-11545) (Yeast).